A 610-amino-acid chain; its full sequence is MSYDPKKIDLFPTLPGVYLMKNEEGEVLYVGKAKNLRQRVKQYFVPGRDGRLMIPYLVAKINYIETIVVTSEKEALLLENNLIKQHKPRYNALLKDDKSYIALKISQNDAWATVRLVRYKGTPEPDGLYFGPYTSAQAARQTLDLLNRLFPLRQCSDQEFARRTRPCLLYQMKRCVGPCTQKCTKGEYQQHLDRTIKFLRGQNKDVLKDLYEEMRLLSEQLEFEKANHLLRTIRYIEKTIESQYVDRPLGHDADAIGLFRYGEHVVVVLMIFRGGKLVGSRHFEFDNIIEEDHELLTSFLLQHYEGATEIPSEILLPSKISDEHPVEEILSARREQKVNLQIPQRGEKKALIEIAQKNAEALFKTQKDEATLREKTLLEMQELLFLTNYPTRIECFDNSNIAGSEPVSSMVAFTDGLKDSKRYRTYRLKIGSKPDDYAAMYEVLTRRYKRAKEENDMPDLVVVDGGKGQLNIAIKVFEELNITGVDLLGLAKEAGRHDKGMTAEQVFTCYQKEPILLKANSPILFLLQKIRDEAHRVAISFHRKRRSKKTLKSALDDIPGIGPAKRKTLLTHFGSLKKIELAADAELREVKGISAANIEAIRTFFQGRKE.

Residues 13-92 (TLPGVYLMKN…IKQHKPRYNA (80 aa)) form the GIY-YIG domain. In terms of domain architecture, UVR spans 204–239 (KDVLKDLYEEMRLLSEQLEFEKANHLLRTIRYIEKT).

This sequence belongs to the UvrC family. In terms of assembly, interacts with UvrB in an incision complex.

Its subcellular location is the cytoplasm. The UvrABC repair system catalyzes the recognition and processing of DNA lesions. UvrC both incises the 5' and 3' sides of the lesion. The N-terminal half is responsible for the 3' incision and the C-terminal half is responsible for the 5' incision. In Protochlamydia amoebophila (strain UWE25), this protein is UvrABC system protein C.